The following is a 430-amino-acid chain: Aspartate aminotransferase, mitochondrial (430 aa).

The transit peptide at Met-1–Ser-28 directs the protein to the mitochondrion. L-aspartate contacts are provided by Gly-65, Trp-160, and Asn-213. Lys-277 bears the N6-(pyridoxal phosphate)lysine mark. Arg-405 is a binding site for L-aspartate.

The protein belongs to the class-I pyridoxal-phosphate-dependent aminotransferase family. As to quaternary structure, homodimer. Pyridoxal 5'-phosphate serves as cofactor.

The protein localises to the mitochondrion matrix. The enzyme catalyses L-aspartate + 2-oxoglutarate = oxaloacetate + L-glutamate. Amino acid aminotransferase important for the metabolism of amino acids and Krebs-cycle related organic acids. No activity with D-Asp or D-Ala as amino donors. In plants, it is involved in nitrogen metabolism and in aspects of carbon and energy metabolism. The sequence is that of Aspartate aminotransferase, mitochondrial (ASP1) from Arabidopsis thaliana (Mouse-ear cress).